Reading from the N-terminus, the 198-residue chain is Phosphoheptose isomerase (198 aa).

The region spanning 40 to 198 (IIGALRGGHK…IEAALMQDAR (159 aa)) is the SIS domain. 55-57 (NGG) is a substrate binding site. Positions 64 and 68 each coordinate Zn(2+). Residues Glu-68, 97–98 (ND), 123–125 (STS), Ser-128, and Gln-175 contribute to the substrate site. The Zn(2+) site is built by Gln-175 and His-183.

It belongs to the SIS family. GmhA subfamily. Homotetramer. It depends on Zn(2+) as a cofactor.

It localises to the cytoplasm. The catalysed reaction is 2 D-sedoheptulose 7-phosphate = D-glycero-alpha-D-manno-heptose 7-phosphate + D-glycero-beta-D-manno-heptose 7-phosphate. It functions in the pathway carbohydrate biosynthesis; D-glycero-D-manno-heptose 7-phosphate biosynthesis; D-glycero-alpha-D-manno-heptose 7-phosphate and D-glycero-beta-D-manno-heptose 7-phosphate from sedoheptulose 7-phosphate: step 1/1. Functionally, catalyzes the isomerization of sedoheptulose 7-phosphate in D-glycero-D-manno-heptose 7-phosphate. The chain is Phosphoheptose isomerase from Bradyrhizobium sp. (strain ORS 278).